The following is a 397-amino-acid chain: 3-ketoacyl-CoA thiolase, mitochondrial (397 aa).

A mitochondrion; not cleaved-targeting transit peptide spans 1 to 16; the sequence is MALLRGVFVVAAKRTP. An N6-acetyllysine; alternate modification is found at Lys-25. An N6-succinyllysine; alternate modification is found at Lys-25. Lys-45 is subject to N6-succinyllysine. Cys-92 (acyl-thioester intermediate) is an active-site residue. Phosphothreonine is present on Thr-119. The residue at position 121 (Ser-121) is a Phosphoserine. Tyr-127 bears the Phosphotyrosine mark. A Phosphothreonine modification is found at Thr-136. Position 137 is an N6-acetyllysine; alternate (Lys-137). The residue at position 137 (Lys-137) is an N6-succinyllysine; alternate. Position 140 is a phosphoserine (Ser-140). N6-acetyllysine; alternate is present on residues Lys-143, Lys-171, Lys-191, and Lys-209. Lys-143, Lys-171, Lys-191, and Lys-209 each carry N6-succinyllysine; alternate. An N6-succinyllysine mark is found at Lys-211, Lys-212, and Lys-214. CoA-binding residues include Arg-224 and Thr-227. Position 234 is an N6-acetyllysine; alternate (Lys-234). Position 234 is an N6-succinyllysine; alternate (Lys-234). Residue Lys-240 is modified to N6-succinyllysine. At Lys-241 the chain carries N6-acetyllysine. Residue Ser-251 coordinates CoA. An N6-acetyllysine mark is found at Lys-269 and Lys-270. The residue at position 305 (Lys-305) is an N6-acetyllysine; alternate. N6-succinyllysine; alternate is present on Lys-305. Phosphoserine is present on Ser-310. Lys-312 is subject to N6-acetyllysine; alternate. Residue Lys-312 is modified to N6-succinyllysine; alternate. Residue Ser-333 is modified to Phosphoserine. 2 positions are modified to N6-acetyllysine: Lys-340 and Lys-375. The Proton donor/acceptor role is filled by Cys-382.

The protein belongs to the thiolase-like superfamily. Thiolase family. Homotetramer. Interacts with BNIP3.

The protein resides in the mitochondrion. It catalyses the reaction an acyl-CoA + acetyl-CoA = a 3-oxoacyl-CoA + CoA. The enzyme catalyses 2 acetyl-CoA = acetoacetyl-CoA + CoA. It carries out the reaction acetyl-CoA + H2O = acetate + CoA + H(+). The catalysed reaction is propanoyl-CoA + H2O = propanoate + CoA + H(+). It catalyses the reaction butanoyl-CoA + H2O = butanoate + CoA + H(+). The enzyme catalyses hexanoyl-CoA + H2O = hexanoate + CoA + H(+). It carries out the reaction octanoyl-CoA + H2O = octanoate + CoA + H(+). The catalysed reaction is decanoyl-CoA + H2O = decanoate + CoA + H(+). It catalyses the reaction dodecanoyl-CoA + H2O = dodecanoate + CoA + H(+). The enzyme catalyses tetradecanoyl-CoA + H2O = tetradecanoate + CoA + H(+). It carries out the reaction hexadecanoyl-CoA + H2O = hexadecanoate + CoA + H(+). Its pathway is lipid metabolism; fatty acid beta-oxidation. In terms of biological role, in the production of energy from fats, this is one of the enzymes that catalyzes the last step of the mitochondrial beta-oxidation pathway, an aerobic process breaking down fatty acids into acetyl-CoA. Using free coenzyme A/CoA, catalyzes the thiolytic cleavage of medium- to long-chain unbranched 3-oxoacyl-CoAs into acetyl-CoA and a fatty acyl-CoA shortened by two carbon atoms. Also catalyzes the condensation of two acetyl-CoA molecules into acetoacetyl-CoA and could be involved in the production of ketone bodies. Also displays hydrolase activity on various fatty acyl-CoAs. Thereby, could be responsible for the production of acetate in a side reaction to beta-oxidation. Abolishes BNIP3-mediated apoptosis and mitochondrial damage. The polypeptide is 3-ketoacyl-CoA thiolase, mitochondrial (ACAA2) (Pongo abelii (Sumatran orangutan)).